We begin with the raw amino-acid sequence, 410 residues long: Argininosuccinate synthase (410 aa).

Residues 13 to 21 (AYSGGLDTS) and alanine 40 contribute to the ATP site. 2 residues coordinate L-citrulline: tyrosine 91 and serine 96. Position 121 (glycine 121) interacts with ATP. Residues threonine 123, asparagine 127, and aspartate 128 each coordinate L-aspartate. Asparagine 127 contributes to the L-citrulline binding site. L-citrulline is bound by residues arginine 131, serine 182, serine 191, glutamate 267, and tyrosine 279.

It belongs to the argininosuccinate synthase family. Type 1 subfamily. As to quaternary structure, homotetramer.

It localises to the cytoplasm. It carries out the reaction L-citrulline + L-aspartate + ATP = 2-(N(omega)-L-arginino)succinate + AMP + diphosphate + H(+). It participates in amino-acid biosynthesis; L-arginine biosynthesis; L-arginine from L-ornithine and carbamoyl phosphate: step 2/3. The sequence is that of Argininosuccinate synthase from Maricaulis maris (strain MCS10) (Caulobacter maris).